The primary structure comprises 118 residues: Putative membrane protein insertion efficiency factor (118 aa).

Residues W76–T118 are disordered. Over residues A91 to A101 the composition is skewed to low complexity.

This sequence belongs to the UPF0161 family.

Its subcellular location is the cell membrane. Could be involved in insertion of integral membrane proteins into the membrane. This is Putative membrane protein insertion efficiency factor from Nocardia farcinica (strain IFM 10152).